The sequence spans 462 residues: tRNA modification GTPase MnmE (462 aa).

Residues arginine 27, glutamate 89, and arginine 128 each coordinate (6S)-5-formyl-5,6,7,8-tetrahydrofolate. A TrmE-type G domain is found at 223–383 (GLKIAIVGRP…LEAAILAAVG (161 aa)). Residues 233-238 (NVGKSS), 252-258 (TDLPGRT), and 277-280 (DTAG) each bind GTP. Mg(2+) is bound by residues serine 237 and threonine 258. Lysine 462 contributes to the (6S)-5-formyl-5,6,7,8-tetrahydrofolate binding site.

This sequence belongs to the TRAFAC class TrmE-Era-EngA-EngB-Septin-like GTPase superfamily. TrmE GTPase family. As to quaternary structure, homodimer. Heterotetramer of two MnmE and two MnmG subunits. K(+) is required as a cofactor.

Its subcellular location is the cytoplasm. In terms of biological role, exhibits a very high intrinsic GTPase hydrolysis rate. Involved in the addition of a carboxymethylaminomethyl (cmnm) group at the wobble position (U34) of certain tRNAs, forming tRNA-cmnm(5)s(2)U34. The sequence is that of tRNA modification GTPase MnmE from Synechococcus sp. (strain ATCC 27144 / PCC 6301 / SAUG 1402/1) (Anacystis nidulans).